The sequence spans 130 residues: Small ribosomal subunit protein uS8 (130 aa).

The protein belongs to the universal ribosomal protein uS8 family. Part of the 30S ribosomal subunit. Contacts proteins S5 and S12.

One of the primary rRNA binding proteins, it binds directly to 16S rRNA central domain where it helps coordinate assembly of the platform of the 30S subunit. This is Small ribosomal subunit protein uS8 from Opitutus terrae (strain DSM 11246 / JCM 15787 / PB90-1).